A 399-amino-acid polypeptide reads, in one-letter code: Elongation factor Tu (399 aa).

Positions 10-209 constitute a tr-type G domain; the sequence is KPHVNIGTIG…DVDEYIPTPV (200 aa). Residues 19 to 26 are G1; that stretch reads GHVDHGKT. 19–26 is a GTP binding site; it reads GHVDHGKT. T26 contacts Mg(2+). The segment at 62-66 is G2; that stretch reads GITIN. A G3 region spans residues 83 to 86; the sequence is DCPG. GTP-binding positions include 83–87 and 138–141; these read DCPGH and NKCD. A G4 region spans residues 138-141; that stretch reads NKCD. Positions 175-177 are G5; the sequence is SAY.

It belongs to the TRAFAC class translation factor GTPase superfamily. Classic translation factor GTPase family. EF-Tu/EF-1A subfamily. Monomer.

It localises to the cytoplasm. It carries out the reaction GTP + H2O = GDP + phosphate + H(+). GTP hydrolase that promotes the GTP-dependent binding of aminoacyl-tRNA to the A-site of ribosomes during protein biosynthesis. This chain is Elongation factor Tu, found in Bifidobacterium animalis subsp. lactis (strain AD011).